The sequence spans 225 residues: NAD(P)H-quinone oxidoreductase subunit K, chloroplastic (225 aa).

Residues Cys-43, Cys-44, Cys-108, and Cys-139 each contribute to the [4Fe-4S] cluster site.

Belongs to the complex I 20 kDa subunit family. In terms of assembly, NDH is composed of at least 16 different subunits, 5 of which are encoded in the nucleus. It depends on [4Fe-4S] cluster as a cofactor.

The protein resides in the plastid. Its subcellular location is the chloroplast thylakoid membrane. It catalyses the reaction a plastoquinone + NADH + (n+1) H(+)(in) = a plastoquinol + NAD(+) + n H(+)(out). The enzyme catalyses a plastoquinone + NADPH + (n+1) H(+)(in) = a plastoquinol + NADP(+) + n H(+)(out). In terms of biological role, NDH shuttles electrons from NAD(P)H:plastoquinone, via FMN and iron-sulfur (Fe-S) centers, to quinones in the photosynthetic chain and possibly in a chloroplast respiratory chain. The immediate electron acceptor for the enzyme in this species is believed to be plastoquinone. Couples the redox reaction to proton translocation, and thus conserves the redox energy in a proton gradient. The sequence is that of NAD(P)H-quinone oxidoreductase subunit K, chloroplastic from Olimarabidopsis pumila (Dwarf rocket).